The following is a 196-amino-acid chain: Crossover junction endodeoxyribonuclease RuvC (196 aa).

Residues aspartate 23, glutamate 83, and histidine 156 contribute to the active site. The Mg(2+) site is built by aspartate 23, glutamate 83, and histidine 156.

This sequence belongs to the RuvC family. In terms of assembly, homodimer which binds Holliday junction (HJ) DNA. The HJ becomes 2-fold symmetrical on binding to RuvC with unstacked arms; it has a different conformation from HJ DNA in complex with RuvA. In the full resolvosome a probable DNA-RuvA(4)-RuvB(12)-RuvC(2) complex forms which resolves the HJ. Requires Mg(2+) as cofactor.

It is found in the cytoplasm. The enzyme catalyses Endonucleolytic cleavage at a junction such as a reciprocal single-stranded crossover between two homologous DNA duplexes (Holliday junction).. Functionally, the RuvA-RuvB-RuvC complex processes Holliday junction (HJ) DNA during genetic recombination and DNA repair. Endonuclease that resolves HJ intermediates. Cleaves cruciform DNA by making single-stranded nicks across the HJ at symmetrical positions within the homologous arms, yielding a 5'-phosphate and a 3'-hydroxyl group; requires a central core of homology in the junction. The consensus cleavage sequence is 5'-(A/T)TT(C/G)-3'. Cleavage occurs on the 3'-side of the TT dinucleotide at the point of strand exchange. HJ branch migration catalyzed by RuvA-RuvB allows RuvC to scan DNA until it finds its consensus sequence, where it cleaves and resolves the cruciform DNA. This is Crossover junction endodeoxyribonuclease RuvC from Treponema pallidum (strain Nichols).